A 463-amino-acid chain; its full sequence is Cysteine--tRNA ligase (463 aa).

Zn(2+) is bound at residue C33. Residues 35–45 (PTVYDFAHIGN) carry the 'HIGH' region motif. 3 residues coordinate Zn(2+): C221, H246, and E250. The short motif at 279–283 (KMSKS) is the 'KMSKS' region element. K282 is a binding site for ATP.

It belongs to the class-I aminoacyl-tRNA synthetase family. In terms of assembly, monomer. Zn(2+) serves as cofactor.

Its subcellular location is the cytoplasm. The catalysed reaction is tRNA(Cys) + L-cysteine + ATP = L-cysteinyl-tRNA(Cys) + AMP + diphosphate. The protein is Cysteine--tRNA ligase of Rhizobium leguminosarum bv. trifolii (strain WSM2304).